Consider the following 149-residue polypeptide: Large ribosomal subunit protein bL9 (149 aa).

The protein belongs to the bacterial ribosomal protein bL9 family.

Its function is as follows. Binds to the 23S rRNA. This chain is Large ribosomal subunit protein bL9, found in Syntrophus aciditrophicus (strain SB).